The primary structure comprises 357 residues: MNHELRSVIDAINPVDQSLMAAAQAHLDNLTKPRGSLGRLEELAARLYCIAGGRRPLRVDPARVFTVAGDHGVSAEGVSPFPQEVTRQMVLNFANGGAGINVLCRTAGVDLRVVDAGCLGGPFPEHPALIQRKVAEGTASIARGPAMSLETCEKALLLGISLAEEAAADGCRCVGTGDMGISNTTPSTALYCAYLGLDPADITGPGAGLAGEAVRHKVEVIRRALEVNRHIVEAGDPVATLAALGGIEIATLAGLVIGAARHGLACVIDGFISTAAFTAAWKICPDVRGYCFLSHASAEPGYRSVVDALNAQPLLHLGLRLGEGTGGALAMFLMRAAADIFNDMATFADAGVSEADD.

The Proton acceptor role is filled by glutamate 323.

It belongs to the CobT family.

It catalyses the reaction 5,6-dimethylbenzimidazole + nicotinate beta-D-ribonucleotide = alpha-ribazole 5'-phosphate + nicotinate + H(+). It participates in nucleoside biosynthesis; alpha-ribazole biosynthesis; alpha-ribazole from 5,6-dimethylbenzimidazole: step 1/2. Its function is as follows. Catalyzes the synthesis of alpha-ribazole-5'-phosphate from nicotinate mononucleotide (NAMN) and 5,6-dimethylbenzimidazole (DMB). The chain is Nicotinate-nucleotide--dimethylbenzimidazole phosphoribosyltransferase from Nitratidesulfovibrio vulgaris (strain ATCC 29579 / DSM 644 / CCUG 34227 / NCIMB 8303 / VKM B-1760 / Hildenborough) (Desulfovibrio vulgaris).